A 277-amino-acid chain; its full sequence is Undecaprenyl-diphosphatase (277 aa).

7 helical membrane passes run 3–23 (IALL…EFLP), 44–64 (AKVF…LVYW), 82–102 (QFAL…LLFG), 109–129 (LFTP…ILWA), 188–208 (ATDF…VYSL), 218–238 (ADVP…WLCI), and 249–269 (SFIP…ATAW).

The protein belongs to the UppP family.

The protein resides in the cell inner membrane. It catalyses the reaction di-trans,octa-cis-undecaprenyl diphosphate + H2O = di-trans,octa-cis-undecaprenyl phosphate + phosphate + H(+). In terms of biological role, catalyzes the dephosphorylation of undecaprenyl diphosphate (UPP). Confers resistance to bacitracin. The chain is Undecaprenyl-diphosphatase from Polaromonas sp. (strain JS666 / ATCC BAA-500).